The following is a 786-amino-acid chain: m7GpppN-mRNA hydrolase dcap-2 (786 aa).

Polar residues predominate over residues 25-61; that stretch reads QKQNKSTEEPPSSVQKLLASLQQAQNKSDLSEQPSTS. The segment at 25–148 is disordered; it reads QKQNKSTEEP…QQQQQYKGPR (124 aa). Positions 62-72 are enriched in basic residues; the sequence is KPKKNEKRKKA. 2 stretches are compositionally biased toward polar residues: residues 101 to 111 and 118 to 133; these read MQQQAENARIS and QVSTSKGSSRNTTAPE. The span at 134–144 shows a compositional bias: low complexity; it reads QQNYQQQQQQY. Residues 238–366 form the Nudix hydrolase domain; it reads STVPTYGAIL…LPAYLQGNKF (129 aa). The Nudix box motif lies at 273–294; that stretch reads GKINQAEPPRDAAIRETFEETG. Mg(2+)-binding residues include glutamate 288 and glutamate 292. 2 disordered regions span residues 556 to 576 and 623 to 655; these read IMHSPNHPLPPTSNSPATPTA and ISSTQKQSIPKATAAPPSTEKTRSASLSGSSQV. 2 stretches are compositionally biased toward polar residues: residues 623 to 632 and 646 to 655; these read ISSTQKQSIP and SASLSGSSQV.

It belongs to the Nudix hydrolase family. DCP2 subfamily. In terms of assembly, may be a component of the decapping complex composed of dcap-1 and dcap-2. The cofactor is Mg(2+). Mn(2+) serves as cofactor. As to expression, expressed in sensory neurons.

The protein localises to the cytoplasmic granule. It is found in the cytoplasm. The protein resides in the perinuclear region. It catalyses the reaction a 5'-end (N(7)-methyl 5'-triphosphoguanosine)-ribonucleoside in mRNA + H2O = N(7)-methyl-GDP + a 5'-end phospho-ribonucleoside in mRNA + 2 H(+). The catalysed reaction is a 5'-end (N(2),N(2),N(7)-trimethyl 5'-triphosphoguanosine)-ribonucleoside in mRNA + H2O = N(2),N(2),N(7)-trimethyl-GDP + a 5'-end phospho-ribonucleoside in mRNA + 2 H(+). Inhibited by capped and uncapped RNA. Not inhibited by dinucleotide cap or methylated nucleotide analogs. In terms of biological role, decapping metalloenzyme that catalyzes the cleavage of the cap structure on mRNAs. Removes the 7-methyl guanine cap structure from mRNA molecules, yielding a 5'-phosphorylated mRNA fragment and 7m-GDP. RNA-decapping enzyme although it does not bind the RNA cap. May contribute to gene regulation in multiple RNA pathways including monomethylguanosine- and trimethylguanosine-capped RNAs. In oocytes, may play a role in the response to stress induced by heat shock, osmotic stress and anoxia. Required for the developmental axon guidance and regrowth of PLM touch receptor neurons. Early in embryogenesis, plays a role in ciliary shape formation in sensory neurons. Promotes survival at high temperatures. This is m7GpppN-mRNA hydrolase dcap-2 from Caenorhabditis elegans.